The chain runs to 102 residues: Small ribosomal subunit protein uS10 (102 aa).

The protein belongs to the universal ribosomal protein uS10 family. In terms of assembly, part of the 30S ribosomal subunit.

In terms of biological role, involved in the binding of tRNA to the ribosomes. This is Small ribosomal subunit protein uS10 from Bacillus thuringiensis (strain Al Hakam).